A 96-amino-acid polypeptide reads, in one-letter code: Co-chaperonin GroES (96 aa).

This sequence belongs to the GroES chaperonin family. Heptamer of 7 subunits arranged in a ring. Interacts with the chaperonin GroEL.

It is found in the cytoplasm. In terms of biological role, together with the chaperonin GroEL, plays an essential role in assisting protein folding. The GroEL-GroES system forms a nano-cage that allows encapsulation of the non-native substrate proteins and provides a physical environment optimized to promote and accelerate protein folding. GroES binds to the apical surface of the GroEL ring, thereby capping the opening of the GroEL channel. This Shewanella halifaxensis (strain HAW-EB4) protein is Co-chaperonin GroES.